The following is a 239-amino-acid chain: tRNA (guanine-N(1)-)-methyltransferase (239 aa).

S-adenosyl-L-methionine is bound by residues glycine 108 and 127 to 132; that span reads LGDFVL.

It belongs to the RNA methyltransferase TrmD family. In terms of assembly, homodimer.

The protein resides in the cytoplasm. The enzyme catalyses guanosine(37) in tRNA + S-adenosyl-L-methionine = N(1)-methylguanosine(37) in tRNA + S-adenosyl-L-homocysteine + H(+). Specifically methylates guanosine-37 in various tRNAs. The sequence is that of tRNA (guanine-N(1)-)-methyltransferase from Streptococcus thermophilus (strain ATCC BAA-250 / LMG 18311).